Here is a 399-residue protein sequence, read N- to C-terminus: Fructose-1,6-bisphosphate aldolase/phosphatase (399 aa).

Asp11 acts as the Proton acceptor; for FBP phosphatase activity in catalysis. Mg(2+) is bound by residues Asp11, His18, Asp52, and Asp53. His18 contributes to the beta-D-fructose 1,6-bisphosphate binding site. His18 serves as a coordination point for dihydroxyacetone phosphate. Residue Tyr91 coordinates beta-D-fructose 1,6-bisphosphate. Mg(2+) is bound at residue Gln95. A beta-D-fructose 1,6-bisphosphate-binding site is contributed by 104–105 (GN). Mg(2+) is bound at residue Asp132. Beta-D-fructose 1,6-bisphosphate is bound at residue Lys133. Lys133 is a binding site for dihydroxyacetone phosphate. Tyr229 serves as the catalytic Proton donor/acceptor; for FBP aldolase activity. Lys232, Asp233, and Asp234 together coordinate Mg(2+). Lys232 functions as the Schiff-base intermediate with DHAP; for FBP aldolase activity in the catalytic mechanism. Beta-D-fructose 1,6-bisphosphate is bound by residues 242–243 (QS), Arg266, Asp297, and Tyr358. The dihydroxyacetone phosphate site is built by Arg266 and Asp297.

Belongs to the FBP aldolase/phosphatase family. In terms of assembly, homooctamer; dimer of tetramers. Mg(2+) serves as cofactor.

It catalyses the reaction beta-D-fructose 1,6-bisphosphate + H2O = beta-D-fructose 6-phosphate + phosphate. The enzyme catalyses beta-D-fructose 1,6-bisphosphate = D-glyceraldehyde 3-phosphate + dihydroxyacetone phosphate. The protein operates within carbohydrate biosynthesis; gluconeogenesis. Functionally, catalyzes two subsequent steps in gluconeogenesis: the aldol condensation of dihydroxyacetone phosphate (DHAP) and glyceraldehyde-3-phosphate (GA3P) to fructose-1,6-bisphosphate (FBP), and the dephosphorylation of FBP to fructose-6-phosphate (F6P). The chain is Fructose-1,6-bisphosphate aldolase/phosphatase from Pyrobaculum neutrophilum (strain DSM 2338 / JCM 9278 / NBRC 100436 / V24Sta) (Thermoproteus neutrophilus).